The following is a 366-amino-acid chain: tRNA/tmRNA (uracil-C(5))-methyltransferase (366 aa).

The S-adenosyl-L-methionine site is built by Q190, Y218, N223, E239, and D299. Residue C324 is the Nucleophile of the active site. The active-site Proton acceptor is E358.

The protein belongs to the class I-like SAM-binding methyltransferase superfamily. RNA M5U methyltransferase family. TrmA subfamily.

It carries out the reaction uridine(54) in tRNA + S-adenosyl-L-methionine = 5-methyluridine(54) in tRNA + S-adenosyl-L-homocysteine + H(+). The enzyme catalyses uridine(341) in tmRNA + S-adenosyl-L-methionine = 5-methyluridine(341) in tmRNA + S-adenosyl-L-homocysteine + H(+). Its function is as follows. Dual-specificity methyltransferase that catalyzes the formation of 5-methyluridine at position 54 (m5U54) in all tRNAs, and that of position 341 (m5U341) in tmRNA (transfer-mRNA). This chain is tRNA/tmRNA (uracil-C(5))-methyltransferase, found in Shigella boydii serotype 18 (strain CDC 3083-94 / BS512).